An 876-amino-acid polypeptide reads, in one-letter code: Alanine--tRNA ligase (876 aa).

The Zn(2+) site is built by His563, His567, Cys665, and His669.

This sequence belongs to the class-II aminoacyl-tRNA synthetase family. The cofactor is Zn(2+).

Its subcellular location is the cytoplasm. It catalyses the reaction tRNA(Ala) + L-alanine + ATP = L-alanyl-tRNA(Ala) + AMP + diphosphate. In terms of biological role, catalyzes the attachment of alanine to tRNA(Ala) in a two-step reaction: alanine is first activated by ATP to form Ala-AMP and then transferred to the acceptor end of tRNA(Ala). Also edits incorrectly charged Ser-tRNA(Ala) and Gly-tRNA(Ala) via its editing domain. This chain is Alanine--tRNA ligase, found in Shouchella clausii (strain KSM-K16) (Alkalihalobacillus clausii).